A 318-amino-acid polypeptide reads, in one-letter code: 1-aminocyclopropane-1-carboxylate oxidase (318 aa).

The region spanning 153-253 (PNFGTKVANY…RMSIASFYNP (101 aa)) is the Fe2OG dioxygenase domain. Residues H177, D179, and H234 each coordinate Fe cation.

This sequence belongs to the iron/ascorbate-dependent oxidoreductase family. The cofactor is Fe cation.

It catalyses the reaction 1-aminocyclopropane-1-carboxylate + L-ascorbate + O2 = ethene + L-dehydroascorbate + hydrogen cyanide + CO2 + 2 H2O. It participates in alkene biosynthesis; ethylene biosynthesis via S-adenosyl-L-methionine; ethylene from S-adenosyl-L-methionine: step 2/2. This Diospyros kaki (Kaki persimmon) protein is 1-aminocyclopropane-1-carboxylate oxidase (DK-ACO1).